Consider the following 271-residue polypeptide: Ribosomal RNA small subunit methyltransferase I (271 aa).

The protein belongs to the methyltransferase superfamily. RsmI family.

The protein resides in the cytoplasm. The enzyme catalyses cytidine(1402) in 16S rRNA + S-adenosyl-L-methionine = 2'-O-methylcytidine(1402) in 16S rRNA + S-adenosyl-L-homocysteine + H(+). Functionally, catalyzes the 2'-O-methylation of the ribose of cytidine 1402 (C1402) in 16S rRNA. The chain is Ribosomal RNA small subunit methyltransferase I from Campylobacter fetus subsp. fetus (strain 82-40).